Reading from the N-terminus, the 353-residue chain is Photosystem II D2 protein (353 aa).

Thr-2 carries the post-translational modification N-acetylthreonine. A Phosphothreonine modification is found at Thr-2. A helical membrane pass occupies residues 41-61 (CAYFALGGWFTGTTFVTSWYT). A chlorophyll a-binding site is contributed by His-118. Residues 125–141 (GFMLRQFELARSVQLRP) form a helical membrane-spanning segment. Residues Gln-130 and Asn-143 each contribute to the pheophytin a site. Residues 153–166 (VFVSVFLIYPLGQS) traverse the membrane as a helical segment. His-198 is a binding site for chlorophyll a. A helical transmembrane segment spans residues 208-228 (AALLCAIHGATVENTLFEDGD). A plastoquinone is bound by residues His-215 and Phe-262. His-215 is a Fe cation binding site. His-269 provides a ligand contact to Fe cation. Residues 279 to 295 (GLWMSALGVVGLALNLR) traverse the membrane as a helical segment.

The protein belongs to the reaction center PufL/M/PsbA/D family. In terms of assembly, PSII is composed of 1 copy each of membrane proteins PsbA, PsbB, PsbC, PsbD, PsbE, PsbF, PsbH, PsbI, PsbJ, PsbK, PsbL, PsbM, PsbT, PsbX, PsbY, PsbZ, Psb30/Ycf12, at least 3 peripheral proteins of the oxygen-evolving complex and a large number of cofactors. It forms dimeric complexes. Requires The D1/D2 heterodimer binds P680, chlorophylls that are the primary electron donor of PSII, and subsequent electron acceptors. It shares a non-heme iron and each subunit binds pheophytin, quinone, additional chlorophylls, carotenoids and lipids. There is also a Cl(-1) ion associated with D1 and D2, which is required for oxygen evolution. The PSII complex binds additional chlorophylls, carotenoids and specific lipids. as cofactor.

It is found in the plastid. Its subcellular location is the chloroplast thylakoid membrane. The enzyme catalyses 2 a plastoquinone + 4 hnu + 2 H2O = 2 a plastoquinol + O2. In terms of biological role, photosystem II (PSII) is a light-driven water:plastoquinone oxidoreductase that uses light energy to abstract electrons from H(2)O, generating O(2) and a proton gradient subsequently used for ATP formation. It consists of a core antenna complex that captures photons, and an electron transfer chain that converts photonic excitation into a charge separation. The D1/D2 (PsbA/PsbD) reaction center heterodimer binds P680, the primary electron donor of PSII as well as several subsequent electron acceptors. D2 is needed for assembly of a stable PSII complex. This Populus deltoides (Eastern poplar) protein is Photosystem II D2 protein.